Here is a 328-residue protein sequence, read N- to C-terminus: Leucine carboxyl methyltransferase 1 (328 aa).

S-adenosyl-L-methionine is bound by residues arginine 81, glycine 105, aspartate 128, 175-177 (DLN), and glutamate 201.

This sequence belongs to the methyltransferase superfamily. LCMT family.

The enzyme catalyses [phosphatase 2A protein]-C-terminal L-leucine + S-adenosyl-L-methionine = [phosphatase 2A protein]-C-terminal L-leucine methyl ester + S-adenosyl-L-homocysteine. Inhibited by S-adenosyl-L-homocysteine. Its function is as follows. Methylates the carboxyl group of the C-terminal leucine residue of protein phosphatase 2A catalytic subunits to form alpha-leucine ester residues. Acts on the two major protein phosphatase 2A catalytic subunits, PPH21 and PPH22. The protein is Leucine carboxyl methyltransferase 1 (PPM1) of Saccharomyces cerevisiae (strain ATCC 204508 / S288c) (Baker's yeast).